Consider the following 86-residue polypeptide: Exodeoxyribonuclease 7 small subunit (86 aa).

The protein belongs to the XseB family. As to quaternary structure, heterooligomer composed of large and small subunits.

Its subcellular location is the cytoplasm. It catalyses the reaction Exonucleolytic cleavage in either 5'- to 3'- or 3'- to 5'-direction to yield nucleoside 5'-phosphates.. Bidirectionally degrades single-stranded DNA into large acid-insoluble oligonucleotides, which are then degraded further into small acid-soluble oligonucleotides. The chain is Exodeoxyribonuclease 7 small subunit from Xanthomonas oryzae pv. oryzae (strain MAFF 311018).